Here is an 81-residue protein sequence, read N- to C-terminus: LYR motif-containing protein 4 (81 aa).

The protein belongs to the complex I LYR family.

It localises to the mitochondrion. The protein resides in the nucleus. The protein operates within cofactor biosynthesis; iron-sulfur cluster biosynthesis. In terms of biological role, required for nuclear and mitochondrial iron-sulfur protein biosynthesis. This Dictyostelium discoideum (Social amoeba) protein is LYR motif-containing protein 4 (lyrm4).